Here is an 84-residue protein sequence, read N- to C-terminus: Cell division topological specificity factor (84 aa).

Belongs to the MinE family.

Prevents the cell division inhibition by proteins MinC and MinD at internal division sites while permitting inhibition at polar sites. This ensures cell division at the proper site by restricting the formation of a division septum at the midpoint of the long axis of the cell. The chain is Cell division topological specificity factor from Pseudomonas syringae pv. tomato (strain ATCC BAA-871 / DC3000).